Here is a 113-residue protein sequence, read N- to C-terminus: Prostate and testis expressed protein 2 (113 aa).

The N-terminal stretch at Met1–Ala26 is a signal peptide. The region spanning Ile29–Pro110 is the UPAR/Ly6 domain. 4 disulfide bridges follow: Cys31/Cys57, Cys34/Cys42, Cys49/Cys80, and Cys84/Cys101.

It belongs to the PATE family. In terms of tissue distribution, isoform 1 and isoform 2 are expressed in prostate and testis. Isoform 2 is expressed in male and female brain at equivalent levels, in particular in cerebellum, cerebral cortex, corpus callosum, occipital, parrietal and temporal lobes, and pons, but not in amygdala, cerebral peduncle, hippocampus and thalamus.

The protein resides in the secreted. The protein is Prostate and testis expressed protein 2 (PATE2) of Homo sapiens (Human).